The following is a 147-amino-acid chain: Sec-independent protein translocase protein TatB (147 aa).

Residues 2–22 (FDGIGFMELLLIGVLGLVVLG) form a helical membrane-spanning segment. Residues 85–97 (QLKQAAQSVNRPY) are compositionally biased toward polar residues. Positions 85–147 (QLKQAAQSVN…DTRSNPKANG (63 aa)) are disordered. Over residues 113 to 133 (ASQSVSTEASPSASSAPTSES) the composition is skewed to low complexity.

Belongs to the TatB family. The Tat system comprises two distinct complexes: a TatABC complex, containing multiple copies of TatA, TatB and TatC subunits, and a separate TatA complex, containing only TatA subunits. Substrates initially bind to the TatABC complex, which probably triggers association of the separate TatA complex to form the active translocon.

It is found in the cell inner membrane. Part of the twin-arginine translocation (Tat) system that transports large folded proteins containing a characteristic twin-arginine motif in their signal peptide across membranes. Together with TatC, TatB is part of a receptor directly interacting with Tat signal peptides. TatB may form an oligomeric binding site that transiently accommodates folded Tat precursor proteins before their translocation. This is Sec-independent protein translocase protein TatB from Shewanella sp. (strain ANA-3).